Consider the following 364-residue polypeptide: Aminomethyltransferase (364 aa).

This sequence belongs to the GcvT family. As to quaternary structure, the glycine cleavage system is composed of four proteins: P, T, L and H.

It carries out the reaction N(6)-[(R)-S(8)-aminomethyldihydrolipoyl]-L-lysyl-[protein] + (6S)-5,6,7,8-tetrahydrofolate = N(6)-[(R)-dihydrolipoyl]-L-lysyl-[protein] + (6R)-5,10-methylene-5,6,7,8-tetrahydrofolate + NH4(+). Functionally, the glycine cleavage system catalyzes the degradation of glycine. The polypeptide is Aminomethyltransferase (Thermotoga maritima (strain ATCC 43589 / DSM 3109 / JCM 10099 / NBRC 100826 / MSB8)).